The following is a 146-amino-acid chain: Hemoglobin subunit beta-S/F (146 aa).

N-acetylvaline is present on V1. The region spanning 2–146 (HLTDGEKNAI…VANALSHKYH (145 aa)) is the Globin domain. S44 carries the phosphoserine modification. K59 is subject to N6-acetyllysine. H63 contacts heme b. K82 carries the N6-acetyllysine modification. H92 is a binding site for heme b. An S-nitrosocysteine modification is found at C93. Position 144 is an N6-acetyllysine (K144).

Belongs to the globin family. In terms of assembly, heterotetramer of two alpha chains and two beta chains. As to expression, red blood cells.

In terms of biological role, involved in oxygen transport from the lung to the various peripheral tissues. The protein is Hemoglobin subunit beta-S/F of Urocitellus townsendii (Townsend's ground squirrel).